Reading from the N-terminus, the 299-residue chain is Acetaldehyde dehydrogenase (299 aa).

Residue 11–14 coordinates NAD(+); sequence SGNI. C126 functions as the Acyl-thioester intermediate in the catalytic mechanism. Residues 157–165 and N267 each bind NAD(+); that span reads SAGPGTRAN.

It belongs to the acetaldehyde dehydrogenase family.

It carries out the reaction acetaldehyde + NAD(+) + CoA = acetyl-CoA + NADH + H(+). This chain is Acetaldehyde dehydrogenase, found in Bacillus cereus (strain ATCC 10987 / NRS 248).